A 122-amino-acid chain; its full sequence is Flagellar protein FliT (122 aa).

The tract at residues 1-50 (MTSTVEFINRWQRIALLSQSLLELAQRGEWDLLLQQEVSYLQRIETVMEK) is required for homodimerization. Residues 60 to 98 (IQDMVAGYIKQTLDNEQLLKGLLQQRLDELSSLIGQSTR) are fliD binding.

The protein belongs to the FliT family. In terms of assembly, homodimer. Interacts with FliD and FlhC.

The protein resides in the cytoplasm. The protein localises to the cytosol. Functionally, dual-function protein that regulates the transcription of class 2 flagellar operons and that also acts as an export chaperone for the filament-capping protein FliD. As a transcriptional regulator, acts as an anti-FlhDC factor; it directly binds FlhC, thus inhibiting the binding of the FlhC/FlhD complex to class 2 promoters, resulting in decreased expression of class 2 flagellar operons. As a chaperone, effects FliD transition to the membrane by preventing its premature polymerization, and by directing it to the export apparatus. The polypeptide is Flagellar protein FliT (Salmonella paratyphi A (strain AKU_12601)).